A 251-amino-acid chain; its full sequence is Ubiquinone/menaquinone biosynthesis C-methyltransferase UbiE (251 aa).

Residues threonine 74, aspartate 95, and 123-124 (NA) contribute to the S-adenosyl-L-methionine site.

This sequence belongs to the class I-like SAM-binding methyltransferase superfamily. MenG/UbiE family.

The enzyme catalyses a 2-demethylmenaquinol + S-adenosyl-L-methionine = a menaquinol + S-adenosyl-L-homocysteine + H(+). It carries out the reaction a 2-methoxy-6-(all-trans-polyprenyl)benzene-1,4-diol + S-adenosyl-L-methionine = a 5-methoxy-2-methyl-3-(all-trans-polyprenyl)benzene-1,4-diol + S-adenosyl-L-homocysteine + H(+). Its pathway is quinol/quinone metabolism; menaquinone biosynthesis; menaquinol from 1,4-dihydroxy-2-naphthoate: step 2/2. The protein operates within cofactor biosynthesis; ubiquinone biosynthesis. Functionally, methyltransferase required for the conversion of demethylmenaquinol (DMKH2) to menaquinol (MKH2) and the conversion of 2-polyprenyl-6-methoxy-1,4-benzoquinol (DDMQH2) to 2-polyprenyl-3-methyl-6-methoxy-1,4-benzoquinol (DMQH2). This chain is Ubiquinone/menaquinone biosynthesis C-methyltransferase UbiE, found in Shewanella frigidimarina (strain NCIMB 400).